The sequence spans 237 residues: Large ribosomal subunit protein uL3 (237 aa).

2 disordered regions span residues 133 to 155 and 213 to 237; these read ASHG…DPGK and PENA…EGGE. Residues 135 to 150 are compositionally biased toward polar residues; it reads HGNSITHRSHGSTGQR. Position 151 is an N5-methylglutamine (Gln-151). Residues 220–237 show a composition bias toward low complexity; sequence AGLRAGAKAEAAATEGGE.

Belongs to the universal ribosomal protein uL3 family. In terms of assembly, part of the 50S ribosomal subunit. Forms a cluster with proteins L14 and L19. Post-translationally, methylated by PrmB.

Its function is as follows. One of the primary rRNA binding proteins, it binds directly near the 3'-end of the 23S rRNA, where it nucleates assembly of the 50S subunit. This Brucella abortus (strain S19) protein is Large ribosomal subunit protein uL3.